Consider the following 2329-residue polypeptide: Pre-mRNA-splicing factor 8 homolog (2329 aa).

Residues 1-53 (MANYGGHPQTEPHAIPDSILEEKSRKWKQLQGKRYSEKKKFGMSDTQKEEMPP) form a disordered region. The segment covering 34–53 (RYSEKKKFGMSDTQKEEMPP) has biased composition (basic and acidic residues). The reverse transcriptase homology domain stretch occupies residues 804-1295 (TTVHWLESRR…KIQTRIKIGL (492 aa)). The segment at 1296–1570 (NSKMPSRFPP…TLKISLIQIF (275 aa)) is linker. Residues 1506-1519 (MKFKKLTNAQRSGL) form an important for branch point selection region. The restriction endonuclease homology domain stretch occupies residues 1574–1745 (LWQKIHESVV…LRERIRKGLQ (172 aa)). The interval 1760–2013 (NYGELFSNQI…ILGMEISAPS (254 aa)) is RNase H homology domain. One can recognise an MPN domain in the interval 2096–2227 (TYILPKNILK…LTAYKLTPSG (132 aa)).

As to quaternary structure, part of the U5 snRNP complex and of the U4/U6-U5 tri-snRNP complex.

The protein resides in the nucleus. Its function is as follows. Functions as a scaffold that mediates the ordered assembly of spliceosomal proteins and snRNAs. Required for the assembly of the U4/U6-U5 tri-snRNP complex. Functions as a scaffold that positions spliceosomal U2, U5 and U6 snRNAs at splice sites on pre-mRNA substrates, so that splicing can occur. Interacts with both the 5' and the 3' splice site. The protein is Pre-mRNA-splicing factor 8 homolog (prp-8) of Caenorhabditis elegans.